A 370-amino-acid chain; its full sequence is Capsular polysaccharide phosphotransferase (370 aa).

This sequence belongs to the stealth family.

Functionally, part of a capsular polysaccharide synthesis locus. This is Capsular polysaccharide phosphotransferase from Actinobacillus suis.